A 236-amino-acid chain; its full sequence is UPF0173 metal-dependent hydrolase AZC_2841 (236 aa).

It belongs to the UPF0173 family.

This chain is UPF0173 metal-dependent hydrolase AZC_2841, found in Azorhizobium caulinodans (strain ATCC 43989 / DSM 5975 / JCM 20966 / LMG 6465 / NBRC 14845 / NCIMB 13405 / ORS 571).